The sequence spans 179 residues: Peptide deformylase (179 aa).

2 residues coordinate Fe cation: Cys-102 and His-144. Residue Glu-145 is part of the active site. A Fe cation-binding site is contributed by His-148.

It belongs to the polypeptide deformylase family. Fe(2+) is required as a cofactor.

It catalyses the reaction N-terminal N-formyl-L-methionyl-[peptide] + H2O = N-terminal L-methionyl-[peptide] + formate. Removes the formyl group from the N-terminal Met of newly synthesized proteins. Requires at least a dipeptide for an efficient rate of reaction. N-terminal L-methionine is a prerequisite for activity but the enzyme has broad specificity at other positions. The sequence is that of Peptide deformylase from Wolbachia pipientis wMel.